Reading from the N-terminus, the 221-residue chain is Intraflagellar transport-associated protein (221 aa).

Ser-59 carries the post-translational modification Phosphoserine.

In terms of assembly, interacts with IFT122; the interaction associates IFTAP with IFT-A complex.

Its function is as follows. Seems to play a role in ciliary BBSome localization, maybe through interaction with IFT-A complex. The polypeptide is Intraflagellar transport-associated protein (Homo sapiens (Human)).